Consider the following 351-residue polypeptide: Cytoplasmic dynein 2 light intermediate chain 1 (351 aa).

The protein belongs to the dynein light intermediate chain family. As to quaternary structure, light intermediate chain of the cytoplasmic dynein complex 2, a multisubunit complex composed at least of eleven different proteins. The cytoplasmic dynein 2 complex consists of two catalytic heavy chains (HCs) and a number of non-catalytic subunits presented by intermediate chains (ICs), light intermediate chains (LICs) and light chains (LCs). Among them, a heavy chain (DYNC2H1), two intermediate chains (DYNC2I2 and DYNC2I1), a light intermediate chain (DYNC2LI1), and a light chain (DYNLT2B) are unique to the dynein-2 complex, but a subset of light chains are also shared by dynein-1 and dynein-2 complexes. Dynein-2 complex is built around two copies of cytoplasmic dynein 2 heavy chain 1 (DYNC2H1). The C-terminal region of DYNC2H1 forms the motor domain, which converts the energy from ATP hydrolysis into movement. Its N-terminal region forms the tail, an extended structure that binds the other subunits and holds the two heavy chains in a homodimer. Interacts with DYNC2H1 (via N-terminus); this interaction stabilizes the dynein-2 complex structure. As to expression, expressed in bone, brain, kidney, and cartilage. Lower expression in heart, liver, lung, placenta and thymus.

It localises to the golgi apparatus. The protein resides in the cytoplasm. The protein localises to the cell projection. Its subcellular location is the cilium. It is found in the cytoskeleton. It localises to the cilium basal body. The protein resides in the cilium axoneme. The protein localises to the microtubule organizing center. Its subcellular location is the centrosome. Functionally, acts as one of several non-catalytic accessory components of the cytoplasmic dynein 2 complex (dynein-2 complex), a motor protein complex that drives the movement of cargos along microtubules within cilia and flagella in concert with the intraflagellar transport (IFT) system, facilitating the assembly of these organelles. Involved in the regulation of ciliary length. The polypeptide is Cytoplasmic dynein 2 light intermediate chain 1 (DYNC2LI1) (Homo sapiens (Human)).